Consider the following 169-residue polypeptide: Nicotinamide-nucleotide adenylyltransferase (169 aa).

It belongs to the archaeal NMN adenylyltransferase family.

Its subcellular location is the cytoplasm. The enzyme catalyses beta-nicotinamide D-ribonucleotide + ATP + H(+) = diphosphate + NAD(+). Its pathway is cofactor biosynthesis; NAD(+) biosynthesis; NAD(+) from nicotinamide D-ribonucleotide: step 1/1. This Picrophilus torridus (strain ATCC 700027 / DSM 9790 / JCM 10055 / NBRC 100828 / KAW 2/3) protein is Nicotinamide-nucleotide adenylyltransferase.